The chain runs to 87 residues: UPF0250 protein NE1487 (87 aa).

It belongs to the UPF0250 family.

The polypeptide is UPF0250 protein NE1487 (Nitrosomonas europaea (strain ATCC 19718 / CIP 103999 / KCTC 2705 / NBRC 14298)).